The primary structure comprises 463 residues: A-type ATP synthase subunit B (463 aa).

The protein belongs to the ATPase alpha/beta chains family. Has multiple subunits with at least A(3), B(3), C, D, E, F, H, I and proteolipid K(x).

The protein localises to the cell membrane. In terms of biological role, component of the A-type ATP synthase that produces ATP from ADP in the presence of a proton gradient across the membrane. The B chain is a regulatory subunit. The chain is A-type ATP synthase subunit B from Methanothrix thermoacetophila (strain DSM 6194 / JCM 14653 / NBRC 101360 / PT) (Methanosaeta thermophila).